The chain runs to 572 residues: Moesin/ezrin/radixin homolog 1 (572 aa).

The FERM domain maps to 1 to 291; the sequence is MNVRVTTMDA…GNHELYMRRR (291 aa). The tract at residues 456-491 is disordered; it reads TTTPSHHHVEEEEEMDNEEELVNGENGNQDFSKDFD. Over residues 466–477 the composition is skewed to acidic residues; it reads EEEEMDNEEELV. Thr-553 carries the phosphothreonine modification.

As to quaternary structure, interacts with cytoskeletal actin.

It is found in the cell junction. The protein localises to the adherens junction. It localises to the cell projection. The protein resides in the microvillus. Its subcellular location is the rhabdomere. It is found in the cell membrane. The protein localises to the cytoplasm. It localises to the cytoskeleton. Functionally, involved in connections of major cytoskeletal structures to the plasma membrane. In Culex quinquefasciatus (Southern house mosquito), this protein is Moesin/ezrin/radixin homolog 1.